Reading from the N-terminus, the 397-residue chain is Digeranylgeranylglycerophospholipid reductase 3 (397 aa).

10 residues coordinate FAD: A16, D35, C46, A47, G49, R102, A126, D283, G295, and I296. K338 contributes to the a 2,3-bis-O-(geranylgeranyl)-sn-glycerol 1-phospholipid binding site.

The protein belongs to the geranylgeranyl reductase family. DGGGPL reductase subfamily. FAD serves as cofactor.

It carries out the reaction a 2,3-bis-O-phytanyl-sn-glycerol 1-phospholipid + 8 A = a 2,3-bis-O-(geranylgeranyl)-sn-glycerol 1-phospholipid + 8 AH2. The enzyme catalyses 2,3-bis-O-(phytanyl)-sn-glycerol 1-phosphate + 8 A = 2,3-bis-O-(geranylgeranyl)-sn-glycerol 1-phosphate + 8 AH2. The catalysed reaction is CDP-2,3-bis-O-(geranylgeranyl)-sn-glycerol + 8 AH2 = CDP-2,3-bis-O-(phytanyl)-sn-glycerol + 8 A. It catalyses the reaction archaetidylserine + 8 AH2 = 2,3-bis-O-phytanyl-sn-glycero-3-phospho-L-serine + 8 A. The protein operates within membrane lipid metabolism; glycerophospholipid metabolism. Is involved in the reduction of 2,3-digeranylgeranylglycerophospholipids (unsaturated archaeols) into 2,3-diphytanylglycerophospholipids (saturated archaeols) in the biosynthesis of archaeal membrane lipids. Catalyzes the formation of archaetidic acid (2,3-di-O-phytanyl-sn-glyceryl phosphate) from 2,3-di-O-geranylgeranylglyceryl phosphate (DGGGP) via the hydrogenation of each double bond of the isoprenoid chains. Is also probably able to reduce double bonds of geranyl groups in CDP-2,3-bis-O-(geranylgeranyl)-sn-glycerol and archaetidylserine, thus acting at various stages in the biosynthesis of archaeal membrane lipids. The polypeptide is Digeranylgeranylglycerophospholipid reductase 3 (Methanosphaera stadtmanae (strain ATCC 43021 / DSM 3091 / JCM 11832 / MCB-3)).